We begin with the raw amino-acid sequence, 1072 residues long: Guanylyl cyclase C (1072 aa).

The first 19 residues, 1 to 19 (MTSLLGLAVRLLLFQPALM), serve as a signal peptide directing secretion. Topologically, residues 20-433 (VFWASQVRQN…VPGLGPQILM (414 aa)) are extracellular. Residues N32, N75, N79, N179, N188, N195, N284, N307, N345, and N402 are each glycosylated (N-linked (GlcNAc...) asparagine). Residues 434–454 (IAVFTLTGILVVLLLIALLVL) traverse the membrane as a helical segment. At 455–1072 (RKYRRDHALR…NNSDHDSTYF (618 aa)) the chain is on the cytoplasmic side. The 260-residue stretch at 489 to 748 (LKIDDDRRRD…KIESTLAKIF (260 aa)) folds into the Protein kinase domain. Positions 823 to 953 (TIYFSDIVGF…DTVNTASRME (131 aa)) constitute a Guanylate cyclase domain.

Belongs to the adenylyl cyclase class-4/guanylyl cyclase family. As to quaternary structure, homotrimer. Interacts via its C-terminal region with NHERF4. Interacts with the lectin chaperone VIP36. Glycosylation at Asn-75 and/or Asn-79 is required for interaction with VIP36 while glycosylation at Asn-345 and Asn-402 modulates ligand-mediated GC-C activation.

It localises to the cell membrane. The protein localises to the endoplasmic reticulum membrane. The catalysed reaction is GTP = 3',5'-cyclic GMP + diphosphate. Functionally, guanylyl cyclase that catalyzes synthesis of cyclic GMP (cGMP) from GTP. This chain is Guanylyl cyclase C (Gucy2c), found in Mus musculus (Mouse).